The sequence spans 135 residues: ATP synthase epsilon chain (135 aa).

The protein belongs to the ATPase epsilon chain family. F-type ATPases have 2 components, CF(1) - the catalytic core - and CF(0) - the membrane proton channel. CF(1) has five subunits: alpha(3), beta(3), gamma(1), delta(1), epsilon(1). CF(0) has three main subunits: a, b and c.

The protein resides in the cell inner membrane. Functionally, produces ATP from ADP in the presence of a proton gradient across the membrane. In Brucella suis (strain ATCC 23445 / NCTC 10510), this protein is ATP synthase epsilon chain.